Here is a 167-residue protein sequence, read N- to C-terminus: Peptide deformylase (167 aa).

Fe cation-binding residues include cysteine 90 and histidine 132. Glutamate 133 is a catalytic residue. Histidine 136 lines the Fe cation pocket.

It belongs to the polypeptide deformylase family. It depends on Fe(2+) as a cofactor.

It catalyses the reaction N-terminal N-formyl-L-methionyl-[peptide] + H2O = N-terminal L-methionyl-[peptide] + formate. Its function is as follows. Removes the formyl group from the N-terminal Met of newly synthesized proteins. Requires at least a dipeptide for an efficient rate of reaction. N-terminal L-methionine is a prerequisite for activity but the enzyme has broad specificity at other positions. In Dehalococcoides mccartyi (strain ATCC BAA-2100 / JCM 16839 / KCTC 5957 / BAV1), this protein is Peptide deformylase.